Consider the following 729-residue polypeptide: Elongation factor 2 (729 aa).

A tr-type G domain is found at 19–262; the sequence is EQIRNIAIAA…MVCEHFPNPI (244 aa). GTP is bound by residues 28–35, 94–98, and 148–151; these read AHVDHGKT, DTPGH, and NKVD. Diphthamide is present on histidine 597.

The protein belongs to the TRAFAC class translation factor GTPase superfamily. Classic translation factor GTPase family. EF-G/EF-2 subfamily.

The protein resides in the cytoplasm. Its function is as follows. Catalyzes the GTP-dependent ribosomal translocation step during translation elongation. During this step, the ribosome changes from the pre-translocational (PRE) to the post-translocational (POST) state as the newly formed A-site-bound peptidyl-tRNA and P-site-bound deacylated tRNA move to the P and E sites, respectively. Catalyzes the coordinated movement of the two tRNA molecules, the mRNA and conformational changes in the ribosome. This Halomicrobium mukohataei (strain ATCC 700874 / DSM 12286 / JCM 9738 / NCIMB 13541) (Haloarcula mukohataei) protein is Elongation factor 2.